Reading from the N-terminus, the 392-residue chain is ATP phosphoribosyltransferase regulatory subunit (392 aa).

This sequence belongs to the class-II aminoacyl-tRNA synthetase family. HisZ subfamily. Heteromultimer composed of HisG and HisZ subunits.

It localises to the cytoplasm. It functions in the pathway amino-acid biosynthesis; L-histidine biosynthesis; L-histidine from 5-phospho-alpha-D-ribose 1-diphosphate: step 1/9. Functionally, required for the first step of histidine biosynthesis. May allow the feedback regulation of ATP phosphoribosyltransferase activity by histidine. The chain is ATP phosphoribosyltransferase regulatory subunit from Listeria monocytogenes serotype 4b (strain F2365).